Consider the following 261-residue polypeptide: Carbonic anhydrase 1 (261 aa).

Position 2 is an N-acetylalanine (Ala2). The 258-residue stretch at Pro4–Phe261 folds into the Alpha-carbonic anhydrase domain. The Proton donor/acceptor role is filled by His65. Residues His95, His97, and His120 each contribute to the Zn(2+) site. Substrate contacts are provided by residues Thr200 and Thr200–His201. Residues Asn238–Phe261 form a disordered region.

This sequence belongs to the alpha-carbonic anhydrase family. It depends on Zn(2+) as a cofactor.

It is found in the cytoplasm. It catalyses the reaction hydrogencarbonate + H(+) = CO2 + H2O. The enzyme catalyses urea = cyanamide + H2O. Its activity is regulated as follows. Inhibited by acetazolamide. Catalyzes the reversible hydration of carbon dioxide. Can hydrate cyanamide to urea. In Macaca mulatta (Rhesus macaque), this protein is Carbonic anhydrase 1 (CA1).